The primary structure comprises 1025 residues: Multidrug resistance protein MdtC (1025 aa).

The next 12 helical transmembrane spans lie at 3 to 23, 333 to 353, 360 to 380, 387 to 407, 431 to 451, 463 to 483, 528 to 548, 853 to 873, 875 to 895, 897 to 917, 953 to 973, and 984 to 1004; these read FFAL…AITL, EVEQ…FLFL, IIPA…MYLC, LSLM…IVVL, VGFT…PLLL, FAVT…TLTP, LVGV…ISIP, VILI…LYES, VHPL…LLAL, LFNA…IGIV, PIMM…LSGG, and ITIV…TPVV.

Belongs to the resistance-nodulation-cell division (RND) (TC 2.A.6) family. MdtC subfamily. In terms of assembly, part of a tripartite efflux system composed of MdtA, MdtB and MdtC. MdtC forms a heteromultimer with MdtB.

It is found in the cell inner membrane. Functionally, the MdtABC tripartite complex confers resistance against novobiocin and deoxycholate. This is Multidrug resistance protein MdtC from Escherichia fergusonii (strain ATCC 35469 / DSM 13698 / CCUG 18766 / IAM 14443 / JCM 21226 / LMG 7866 / NBRC 102419 / NCTC 12128 / CDC 0568-73).